Reading from the N-terminus, the 422-residue chain is Acylglycerol kinase, mitochondrial (422 aa).

K6 is modified (N6-acetyllysine). Residues 15–31 (TTAGLCLLTWGGHWLYG) form a hydrophobic region. The DAGKc domain occupies 58–199 (AQVKKATVFL…LDVLQIKGEK (142 aa)). Positions 249–271 (QASISYTGPTERPPSEPEETPVQ) are disordered.

It belongs to the AGK family. As to quaternary structure, component of the TIM22 complex, which core is composed of TIMM22, associated with TIMM10 (TIMM10A and/or TIMM10B), TIMM9, AGK and TIMM29. Interacts with SMIM26. Mg(2+) is required as a cofactor.

Its subcellular location is the mitochondrion inner membrane. The protein localises to the mitochondrion intermembrane space. The catalysed reaction is a monoacylglycerol + ATP = a monoacyl-sn-glycero-3-phosphate + ADP + H(+). The enzyme catalyses a 1,2-diacyl-sn-glycerol + ATP = a 1,2-diacyl-sn-glycero-3-phosphate + ADP + H(+). It carries out the reaction an N-acylsphing-4-enine + ATP = an N-acylsphing-4-enine 1-phosphate + ADP + H(+). It catalyses the reaction 1-(9Z-octadecenoyl)-sn-glycerol + ATP = 1-(9Z-octadecenoyl)-sn-glycero-3-phosphate + ADP + H(+). The catalysed reaction is 1,2-di-(9Z-octadecenoyl)-sn-glycerol + ATP = 1,2-di-(9Z-octadecenoyl)-sn-glycero-3-phosphate + ADP + H(+). The enzyme catalyses a 1-acyl-sn-glycerol + ATP = a 1-acyl-sn-glycero-3-phosphate + ADP + H(+). It carries out the reaction 1-hexadecanoyl-sn-glycerol + ATP = 1-hexadecanoyl-sn-glycero-3-phosphate + ADP + H(+). It catalyses the reaction a 2-acylglycerol + ATP = a 2-acyl-sn-glycerol 3-phosphate + ADP + H(+). The catalysed reaction is 2-(5Z,8Z,11Z,14Z-eicosatetraenoyl)-glycerol + ATP = 2-(5Z,8Z,11Z,14Z-eicosatetraenoyl)-sn-glycero-3-phosphate + ADP + H(+). The enzyme catalyses 1-(5Z,8Z,11Z,14Z-eicosatetraenoyl)-sn-glycerol + ATP = 1-(5Z,8Z,11Z,14Z-eicosatetraenoyl)-sn-glycero-3-phosphate + ADP + H(+). It carries out the reaction N-(hexanoyl)sphing-4-enine + ATP = N-hexanoylsphing-4-enine 1-phosphate + ADP + H(+). It participates in lipid metabolism; glycerolipid metabolism. Lipid kinase that can phosphorylate both monoacylglycerol and diacylglycerol to form lysophosphatidic acid (LPA) and phosphatidic acid (PA), respectively. Phosphorylates ceramide but not sphingosine. Phosphorylates 1,2-dioleoylglycerol more rapidly than 2,3-dioleoylglycerol. Independently of its lipid kinase activity, acts as a component of the TIM22 complex. The TIM22 complex mediates the import and insertion of multi-pass transmembrane proteins into the mitochondrial inner membrane by forming a twin-pore translocase that uses the membrane potential as the external driving force. In the TIM22 complex, required for the import of a subset of metabolite carriers into mitochondria, such as ANT1/SLC25A4 and SLC25A24, while it is not required for the import of TIMM23. Overexpression increases the formation and secretion of LPA, resulting in transactivation of EGFR and activation of the downstream MAPK signaling pathway, leading to increased cell growth. The protein is Acylglycerol kinase, mitochondrial of Pongo abelii (Sumatran orangutan).